A 677-amino-acid chain; its full sequence is UvrABC system protein B (677 aa).

A Helicase ATP-binding domain is found at 24-412 (EGVLEGVPAQ…EGIVVEQVIR (389 aa)). 37-44 (GVTGSGKT) contributes to the ATP binding site. The short motif at 90–113 (YYDYYQPEAYLPSSDTYIEKDLAI) is the Beta-hairpin element. The 163-residue stretch at 429–591 (QIDDLMEEIQ…ITPQQIKKAR (163 aa)) folds into the Helicase C-terminal domain. The 36-residue stretch at 635–670 (EKSMERTRKLMQEAAKKLEFIEAAQYRDELLKMEDL) folds into the UVR domain.

The protein belongs to the UvrB family. As to quaternary structure, forms a heterotetramer with UvrA during the search for lesions. Interacts with UvrC in an incision complex.

Its subcellular location is the cytoplasm. In terms of biological role, the UvrABC repair system catalyzes the recognition and processing of DNA lesions. A damage recognition complex composed of 2 UvrA and 2 UvrB subunits scans DNA for abnormalities. Upon binding of the UvrA(2)B(2) complex to a putative damaged site, the DNA wraps around one UvrB monomer. DNA wrap is dependent on ATP binding by UvrB and probably causes local melting of the DNA helix, facilitating insertion of UvrB beta-hairpin between the DNA strands. Then UvrB probes one DNA strand for the presence of a lesion. If a lesion is found the UvrA subunits dissociate and the UvrB-DNA preincision complex is formed. This complex is subsequently bound by UvrC and the second UvrB is released. If no lesion is found, the DNA wraps around the other UvrB subunit that will check the other stand for damage. In Bacteroides fragilis (strain ATCC 25285 / DSM 2151 / CCUG 4856 / JCM 11019 / LMG 10263 / NCTC 9343 / Onslow / VPI 2553 / EN-2), this protein is UvrABC system protein B.